A 206-amino-acid polypeptide reads, in one-letter code: Large ribosomal subunit protein uL4 (206 aa).

A disordered region spans residues 63–93 (MYKQKGTGRARHHSARAPQFRGGGKAHGPVV). Basic residues predominate over residues 64–77 (YKQKGTGRARHHSA).

It belongs to the universal ribosomal protein uL4 family. As to quaternary structure, part of the 50S ribosomal subunit.

Functionally, one of the primary rRNA binding proteins, this protein initially binds near the 5'-end of the 23S rRNA. It is important during the early stages of 50S assembly. It makes multiple contacts with different domains of the 23S rRNA in the assembled 50S subunit and ribosome. Its function is as follows. Forms part of the polypeptide exit tunnel. The sequence is that of Large ribosomal subunit protein uL4 from Sinorhizobium medicae (strain WSM419) (Ensifer medicae).